Reading from the N-terminus, the 176-residue chain is ATP synthase subunit b (176 aa).

Residues 18 to 38 traverse the membrane as a helical segment; the sequence is FGLDATVWVSIAMLVFLGILV.

The protein belongs to the ATPase B chain family. As to quaternary structure, F-type ATPases have 2 components, F(1) - the catalytic core - and F(0) - the membrane proton channel. F(1) has five subunits: alpha(3), beta(3), gamma(1), delta(1), epsilon(1). F(0) has three main subunits: a(1), b(2) and c(10-14). The alpha and beta chains form an alternating ring which encloses part of the gamma chain. F(1) is attached to F(0) by a central stalk formed by the gamma and epsilon chains, while a peripheral stalk is formed by the delta and b chains.

The protein resides in the cell inner membrane. Its function is as follows. F(1)F(0) ATP synthase produces ATP from ADP in the presence of a proton or sodium gradient. F-type ATPases consist of two structural domains, F(1) containing the extramembraneous catalytic core and F(0) containing the membrane proton channel, linked together by a central stalk and a peripheral stalk. During catalysis, ATP synthesis in the catalytic domain of F(1) is coupled via a rotary mechanism of the central stalk subunits to proton translocation. Component of the F(0) channel, it forms part of the peripheral stalk, linking F(1) to F(0). This chain is ATP synthase subunit b, found in Sphingopyxis alaskensis (strain DSM 13593 / LMG 18877 / RB2256) (Sphingomonas alaskensis).